The sequence spans 760 residues: Xaa-Pro dipeptidyl-peptidase (760 aa).

Active-site charge relay system residues include serine 349, aspartate 469, and histidine 499.

It belongs to the peptidase S15 family. As to quaternary structure, homodimer.

Its subcellular location is the cytoplasm. It carries out the reaction Hydrolyzes Xaa-Pro-|- bonds to release unblocked, N-terminal dipeptides from substrates including Ala-Pro-|-p-nitroanilide and (sequentially) Tyr-Pro-|-Phe-Pro-|-Gly-Pro-|-Ile.. Functionally, removes N-terminal dipeptides sequentially from polypeptides having unsubstituted N-termini provided that the penultimate residue is proline. This Streptococcus pyogenes serotype M4 (strain MGAS10750) protein is Xaa-Pro dipeptidyl-peptidase.